The following is a 440-amino-acid chain: Probable D-serine dehydratase (440 aa).

Lys-120 carries the post-translational modification N6-(pyridoxal phosphate)lysine.

Belongs to the serine/threonine dehydratase family. DsdA subfamily. It depends on pyridoxal 5'-phosphate as a cofactor.

The enzyme catalyses D-serine = pyruvate + NH4(+). This chain is Probable D-serine dehydratase, found in Shouchella clausii (strain KSM-K16) (Alkalihalobacillus clausii).